A 156-amino-acid chain; its full sequence is MGLSLLWALLQDMVLAAVPALGFAMVFNVPLKVLPYCALLGGVGHGVRFLAIHFGMNIEWASFLAAILIGIIGIRWSRWLLAHPKVFTVAAVIPMFPGISAYTAMISVVEISHLGYSEALMSVMMTNFLKASFIVGALSIGLSLPGIWLYRKRPGV.

4 helical membrane passes run 7–27 (WALLQDMVLAAVPALGFAMVF), 54–74 (FGMNIEWASFLAAILIGIIGI), 86–106 (VFTVAAVIPMFPGISAYTAMI), and 128–148 (FLKASFIVGALSIGLSLPGIW).

Belongs to the ThrE exporter (TC 2.A.79) family. The transporter is composed of YjjB and YjjP.

The protein resides in the cell inner membrane. Functionally, involved in succinate export with YjjP. Both proteins are required for export. In Pectobacterium atrosepticum (strain SCRI 1043 / ATCC BAA-672) (Erwinia carotovora subsp. atroseptica), this protein is Probable succinate transporter subunit YjjB.